The chain runs to 223 residues: Translation initiation factor 6 (223 aa).

This sequence belongs to the eIF-6 family.

Binds to the 50S ribosomal subunit and prevents its association with the 30S ribosomal subunit to form the 70S initiation complex. This chain is Translation initiation factor 6, found in Sulfurisphaera tokodaii (strain DSM 16993 / JCM 10545 / NBRC 100140 / 7) (Sulfolobus tokodaii).